We begin with the raw amino-acid sequence, 408 residues long: Biphenyl dioxygenase system ferredoxin--NAD(+) reductase component (408 aa).

4-35 (TIAIIGAGLAGSTAARALRAQGYEGRIHLLGD) is a binding site for FAD. An NAD(+)-binding site is contributed by 145 to 173 (SLVIVGGGLIGCEVATTARKLSVHVTILE).

Belongs to the bacterial ring-hydroxylating dioxygenase ferredoxin reductase family. As to quaternary structure, this dioxygenase system consists of four proteins: the two subunits of the hydroxylase component (BphA and BphE), a ferredoxin (BphF) and a ferredoxin reductase (BphG). The cofactor is FAD.

It catalyses the reaction 2 reduced [2Fe-2S]-[ferredoxin] + NAD(+) + H(+) = 2 oxidized [2Fe-2S]-[ferredoxin] + NADH. It participates in xenobiotic degradation; biphenyl degradation. Functionally, part of the electron transfer component of biphenyl dioxygenase, transfers electrons from ferredoxin (BphF) to NADH. The protein is Biphenyl dioxygenase system ferredoxin--NAD(+) reductase component (bphG) of Paraburkholderia xenovorans (strain LB400).